The sequence spans 124 residues: Putative iron-sulfur cluster insertion protein ErpA (124 aa).

3 residues coordinate iron-sulfur cluster: Cys-52, Cys-116, and Cys-118.

This sequence belongs to the HesB/IscA family. Homodimer. The cofactor is iron-sulfur cluster.

Required for insertion of 4Fe-4S clusters. The chain is Putative iron-sulfur cluster insertion protein ErpA from Ralstonia pickettii (strain 12J).